We begin with the raw amino-acid sequence, 118 residues long: T cell receptor gamma variable 3 (118 aa).

The first 17 residues, 1-17 (MRWALLVLLAFLSPASQ), serve as a signal peptide directing secretion. The region spanning 18 to 118 (KSSNLEGRTK…GVYYCATWDR (101 aa)) is the Ig-like domain. Residues C41 and C113 are joined by a disulfide bond. N106 carries N-linked (GlcNAc...) asparagine glycosylation.

In terms of assembly, gamma-delta TR is a heterodimer composed of a gamma and delta chain; disulfide-linked. The gamma-delta TR is associated with the transmembrane signaling CD3 coreceptor proteins following the stoichiometry: a single gamma-delta TR heterodimer associates with one CD3D-CD3E heterodimer, one CD3G-CD3E heterodimer and one CD247 homodimer forming a stable octameric structure. Upon activation, gamma-delta TR complex associates with FCER1G to initiate intracellular signaling.

It is found in the cell membrane. Its function is as follows. V region of the variable domain of T cell receptor (TR) gamma chain that participates in the antigen recognition. Gamma-delta TRs recognize a variety of self and foreign non-peptide antigens frequently expressed at the epithelial boundaries between the host and external environment, including endogenous lipids presented by MH-like protein CD1D and phosphoantigens presented by butyrophilin-like molecule BTN3A1. Upon antigen recognition induces rapid, innate-like immune responses involved in pathogen clearance and tissue repair. Binding of gamma-delta TR complex to antigen triggers phosphorylation of immunoreceptor tyrosine-based activation motifs (ITAMs) in the CD3 chains by the LCK and FYN kinases, allowing the recruitment, phosphorylation, and activation of ZAP70 that facilitates phosphorylation of the scaffolding proteins LCP2 and LAT. This lead to the formation of a supramolecular signalosome that recruits the phospholipase PLCG1, resulting in calcium mobilization and ERK activation, ultimately leading to T cell expansion and differentiation into effector cells. Gamma-delta TRs are produced through somatic rearrangement of a limited repertoire of variable (V), diversity (D), and joining (J) genes. The potential diversity of gamma-delta TRs is conferred by the unique ability to rearrange (D) genes in tandem and to utilize all three reading frames. The combinatorial diversity is considerably increased by the sequence exonuclease trimming and random nucleotide (N) region additions which occur during the V-(D)-J rearrangements. The sequence is that of T cell receptor gamma variable 3 from Homo sapiens (Human).